Reading from the N-terminus, the 683-residue chain is Capsid polyprotein VP90 (683 aa).

Residues 1 to 13 (MAGGATAPAGAKP) show a composition bias toward low complexity. 2 disordered regions span residues 1-45 (MAGG…KQEL) and 391-413 (PNAE…QPPA). The segment covering 14–39 (KQPKQKQKKPSSQARKKPSQKQKAMK) has biased composition (basic residues). Residues 398–413 (LPPPTTGAQPQPQPPA) are compositionally biased toward pro residues.

This sequence belongs to the astroviridae capsid polyprotein family. Specific enzymatic cleavages by the host yield mature proteins.

The protein resides in the virion. Functionally, self-assembles to form an icosahedral T=3 immature capsid. This is Capsid polyprotein VP90 from Gallus gallus (Chicken).